The sequence spans 646 residues: Phosphomethylpyrimidine synthase (646 aa).

Over residues 1–13 (MNIRSNPDTTRPA) the composition is skewed to polar residues. Positions 1–21 (MNIRSNPDTTRPAVTTGGLPS) are disordered. Substrate contacts are provided by residues Asn221, Met250, Tyr279, His315, 335 to 337 (SRG), 376 to 379 (DGLR), and Glu415. Zn(2+) is bound at residue His419. Tyr442 lines the substrate pocket. Position 483 (His483) interacts with Zn(2+). Residues Cys563, Cys566, and Cys571 each coordinate [4Fe-4S] cluster.

The protein belongs to the ThiC family. As to quaternary structure, homodimer. The cofactor is [4Fe-4S] cluster.

The catalysed reaction is 5-amino-1-(5-phospho-beta-D-ribosyl)imidazole + S-adenosyl-L-methionine = 4-amino-2-methyl-5-(phosphooxymethyl)pyrimidine + CO + 5'-deoxyadenosine + formate + L-methionine + 3 H(+). It participates in cofactor biosynthesis; thiamine diphosphate biosynthesis. In terms of biological role, catalyzes the synthesis of the hydroxymethylpyrimidine phosphate (HMP-P) moiety of thiamine from aminoimidazole ribotide (AIR) in a radical S-adenosyl-L-methionine (SAM)-dependent reaction. This Rhodopseudomonas palustris (strain HaA2) protein is Phosphomethylpyrimidine synthase.